Consider the following 1361-residue polypeptide: DNA-directed RNA polymerase subunit beta (1361 aa).

It belongs to the RNA polymerase beta chain family. As to quaternary structure, the RNAP catalytic core consists of 2 alpha, 1 beta, 1 beta' and 1 omega subunit. When a sigma factor is associated with the core the holoenzyme is formed, which can initiate transcription.

It carries out the reaction RNA(n) + a ribonucleoside 5'-triphosphate = RNA(n+1) + diphosphate. Functionally, DNA-dependent RNA polymerase catalyzes the transcription of DNA into RNA using the four ribonucleoside triphosphates as substrates. This chain is DNA-directed RNA polymerase subunit beta, found in Dichelobacter nodosus (strain VCS1703A).